A 105-amino-acid chain; its full sequence is Multidrug resistance protein EbrA (105 aa).

Transmembrane regions (helical) follow at residues 2–22, 35–55, 57–77, and 84–104; these read LVGYIFLTIAICSESIGAAML, ALVVIAYSLAFYMLSLTLNHI, LSLSYATWSGVGTVLTAVIGV, and LNAKGLIGILLLISGVVLLNW.

The protein belongs to the drug/metabolite transporter (DMT) superfamily. Small multidrug resistance (SMR) (TC 2.A.7.1) family. EbrA/EbrB subfamily. As to quaternary structure, the efflux pump is composed of EbrA and EbrB.

Its subcellular location is the cell membrane. Functionally, part of a multidrug efflux pump. Confers resistance to cationic lipophilic dyes such as ethidium bromide, acriflavine, pyronine Y and safranin O. The efflux is probably coupled to an influx of protons. This chain is Multidrug resistance protein EbrA (ebrA), found in Bacillus atrophaeus.